Reading from the N-terminus, the 298-residue chain is Lipoyl synthase (298 aa).

[4Fe-4S] cluster contacts are provided by C40, C45, C51, C67, C71, C74, and S280. Positions 53-269 (AVRKTATFMI…KEIALSKGFS (217 aa)) constitute a Radical SAM core domain.

Belongs to the radical SAM superfamily. Lipoyl synthase family. [4Fe-4S] cluster serves as cofactor.

It is found in the cytoplasm. The catalysed reaction is [[Fe-S] cluster scaffold protein carrying a second [4Fe-4S](2+) cluster] + N(6)-octanoyl-L-lysyl-[protein] + 2 oxidized [2Fe-2S]-[ferredoxin] + 2 S-adenosyl-L-methionine + 4 H(+) = [[Fe-S] cluster scaffold protein] + N(6)-[(R)-dihydrolipoyl]-L-lysyl-[protein] + 4 Fe(3+) + 2 hydrogen sulfide + 2 5'-deoxyadenosine + 2 L-methionine + 2 reduced [2Fe-2S]-[ferredoxin]. It functions in the pathway protein modification; protein lipoylation via endogenous pathway; protein N(6)-(lipoyl)lysine from octanoyl-[acyl-carrier-protein]. Catalyzes the radical-mediated insertion of two sulfur atoms into the C-6 and C-8 positions of the octanoyl moiety bound to the lipoyl domains of lipoate-dependent enzymes, thereby converting the octanoylated domains into lipoylated derivatives. The protein is Lipoyl synthase of Bacillus thuringiensis (strain Al Hakam).